Reading from the N-terminus, the 134-residue chain is Ribonuclease VapC1 (134 aa).

A PINc domain is found at 3 to 132 (YMLDTNIIIY…RITDLQWQDW (130 aa)). Mg(2+) contacts are provided by Asp6 and Asp99.

This sequence belongs to the PINc/VapC protein family. In terms of assembly, forms a complex with VapB1. Mg(2+) is required as a cofactor.

Functionally, toxic component of a type II toxin-antitoxin (TA) system. Upon expression in E.coli inhibits growth in liquid culture. Its toxic effect is neutralized by coexpression with antitoxin VapB1. Degrades RNA but not ss- or ds-DNA in vitro, degradation is inhibited by VapB1 antitoxin. In Haemophilus influenzae (strain R2866), this protein is Ribonuclease VapC1.